We begin with the raw amino-acid sequence, 617 residues long: E3 ubiquitin-protein ligase synoviolin (617 aa).

Over 1-4 the chain is Cytoplasmic; the sequence is MFRT. Residues 1–84 form a necessary and sufficient for SEL1L interaction region; the sequence is MFRTAVMMAA…EHLLERSWYA (84 aa). The involved in FAM8A1 interaction stretch occupies residues 1 to 251; sequence MFRTAVMMAA…LFAIRPMYLA (251 aa). Residues 5 to 25 traverse the membrane as a helical segment; it reads AVMMAASLALTGAVVAHAYYL. Residues 26–41 are Lumenal-facing; the sequence is KHQFYPTVVYLTKSSP. A helical transmembrane segment spans residues 42-62; the sequence is SMAVLYIQAFVLVFLLGKVMG. Over 63-98 the chain is Cytoplasmic; that stretch reads KVFFGQLRAAEMEHLLERSWYAVTETCLAFTVFRDD. Residues 99–119 form a helical membrane-spanning segment; that stretch reads FSPRFVALFTLLLFLKCFHWL. The Lumenal portion of the chain corresponds to 120-140; the sequence is AEDRVDFMERSPNISWLFHCR. Residues 141–161 form a helical membrane-spanning segment; sequence IVSLMFLLGILDFLFVSHAYH. Residues 162-169 lie on the Cytoplasmic side of the membrane; it reads SILTRGAS. A helical transmembrane segment spans residues 170 to 190; it reads VQLVFGFEYAILMTMVLTIFI. Residues 191–224 lie on the Lumenal side of the membrane; it reads KYVLHSVDLQSENPWDNKAVYMLYTELFTGFIKV. A helical transmembrane segment spans residues 225–245; that stretch reads LLYMAFMTIMIKVHTFPLFAI. An interaction with p53/TP53 region spans residues 236 to 270; it reads KVHTFPLFAIRPMYLAMRQFKKAVTDAIMSRRAIR. Residues 246–617 are Cytoplasmic-facing; it reads RPMYLAMRQF…LQKLESPVAH (372 aa). C291, C294, C307, H309, H312, C315, C326, and C329 together coordinate Zn(2+). Residues 291–330 form an RING-type; atypical zinc finger; sequence CIICREEMVTGAKRLPCNHIFHTSCLRSWFQRQQTCPTCR. Disordered stretches follow at residues 337–375, 393–453, and 535–617; these read SLPA…GLLP, PVPP…PAPG, and RPAT…PVAH. Positions 341–375 are enriched in pro residues; that stretch reads QSPPPPEPADQGPPPAPHPPPLLPQPPNFPQGLLP. Low complexity predominate over residues 417–451; it reads PSGAATTTAAGTSATAASATASGPGSGSAPEAGPA. An HAF-H domain; necessary to form higher-order Hrd1 complexes region spans residues 480-535; sequence GFAGLTPEELRALEGHERQHLEARLQSLRNIHTLLDAAMLQINQYLTVLASLGPPR. The segment covering 537 to 569 has biased composition (low complexity); sequence ATSVNSTEETATTVVAAASSTSIPSSEATTPTP. The span at 591 to 600 shows a compositional bias: acidic residues; it reads EMPEDGEPDA. S613 carries the post-translational modification Phosphoserine.

This sequence belongs to the HRD1 family. Homodimer. Interacts with p53/TP53. Interacts with HTT. Component of the HRD1 complex, which comprises at least SYNV1/HRD1, DERL1/2, FAM8A1, HERPUD1/HERP, OS9, SEL1L and UBE2J1. FAM8A1 is stabilized by interaction with SYNV1, which prevents its proteasomal degradation. OS9 and UBE2J1 recruitment to the complex may be mediated by SEL1L. SYNV1 assembles with SEL1L and FAM8A1 through its transmembrane domains, but interaction with its cytoplasmic domain is required to confer stability to FAM8A1 and enhance recruitment of HERPUD1. The HRD1 complex also associates with VIMP and may transfer misfolded proteins from the endoplasmic reticulum to VCP. May form a complex with ERLEC1, HSPA5, OS9 and SEL1L. Interacts with VCP. Interacts with UBXN6. Interacts with BAG6. Interacts with NFE2L1. Interacts (via N-terminus) with components of the pre-B cell receptor, including IGLL1 and VPREB1. Interacts with CREB3L3; this interaction leads to CREB3L3 ubiquitination and proteasomal degradation. In terms of processing, not N-glycosylated. Auto-ubiquitinated. Deubiquitinated by USP19. In terms of tissue distribution, ubiquitously expressed, with highest levels in liver and kidney (at protein level). Up-regulated in synovial tissues from patients with rheumatoid arthritis (at protein level).

Its subcellular location is the endoplasmic reticulum membrane. The catalysed reaction is S-ubiquitinyl-[E2 ubiquitin-conjugating enzyme]-L-cysteine + [acceptor protein]-L-lysine = [E2 ubiquitin-conjugating enzyme]-L-cysteine + N(6)-ubiquitinyl-[acceptor protein]-L-lysine.. Its pathway is protein modification; protein ubiquitination. Functionally, E3 ubiquitin-protein ligase which accepts ubiquitin specifically from endoplasmic reticulum-associated UBC7 E2 ligase and transfers it to substrates, promoting their degradation. Component of the endoplasmic reticulum quality control (ERQC) system also called ER-associated degradation (ERAD) involved in ubiquitin-dependent degradation of misfolded endoplasmic reticulum proteins. Also promotes the degradation of normal but naturally short-lived proteins such as SGK. Protects cells from ER stress-induced apoptosis. Protects neurons from apoptosis induced by polyglutamine-expanded huntingtin (HTT) or unfolded GPR37 by promoting their degradation. Sequesters p53/TP53 in the cytoplasm and promotes its degradation, thereby negatively regulating its biological function in transcription, cell cycle regulation and apoptosis. Mediates the ubiquitination and subsequent degradation of cytoplasmic NFE2L1. During the early stage of B cell development, required for degradation of the pre-B cell receptor (pre-BCR) complex, hence supporting further differentiation into mature B cells. This chain is E3 ubiquitin-protein ligase synoviolin, found in Homo sapiens (Human).